Consider the following 415-residue polypeptide: Casein kinase I isoform delta (415 aa).

In terms of domain architecture, Protein kinase spans 9–277 (YRLGRKIGSG…YLRQLFRNLF (269 aa)). ATP contacts are provided by residues 15–23 (IGSGSFGDI) and lysine 38. The active-site Proton acceptor is the aspartate 128. Positions 278-364 (HRQGFSYDYV…TSPRPVSGME (87 aa)) are centrosomal localization signal (CLS). The segment covering 301–315 (ADDAERERRDREERL) has biased composition (basic and acidic residues). A disordered region spans residues 301–415 (ADDAERERRD…SSGLQSVVHR (115 aa)). Residues 317–342 (HSRNPATRGLPSTASGRLRGTQEVAP) are autoinhibitory. Phosphoserine occurs at positions 328 and 331. Residues 347–358 (TPTSHTANTSPR) are compositionally biased toward polar residues. Serine 370 bears the Phosphoserine mark. Omega-N-methylarginine is present on arginine 375. Over residues 380–400 (NISSSDLTGRQDTSRMSTSQI) the composition is skewed to polar residues. Serine 382, serine 383, serine 384, serine 407, and serine 411 each carry phosphoserine.

The protein belongs to the protein kinase superfamily. CK1 Ser/Thr protein kinase family. Casein kinase I subfamily. Monomer. Component of the circadian core oscillator, which includes the CRY proteins, CLOCK, or NPAS2, ARTNL/BMAL1 or ARTNL2/BMAL2, CSNK1D and/or CSNK1E, TIMELESS and the PER proteins. Interacts with DNMT1 and MAP1A. Interacts directly with PER1 and PER2 which may lead to their degradation. Interacts with MAPT/TAU, SNAPIN, DBNDD2, AIB1/NCOA3 and ESR1. Interacts with AKAP9/AKAP450; this interaction promotes centrosomal subcellular location. Binds to tubulins in mitotic cells upon DNA damage. Interacts with GJA1. Interacts with DDX3X; this interaction enhances CSNK1D kinase activity in vitro, but it is unclear whether this interaction is physiologically relevant. Interacts with FAM83A, FAM83B, FAM83E and FAM83H (via DUF1669). In terms of processing, autophosphorylated on serine and threonine residues; this autophosphorylation represses activity. Reactivated by phosphatase-mediated dephosphorylation. May be dephosphorylated by PP1.

It is found in the cytoplasm. It localises to the nucleus. The protein localises to the cytoskeleton. The protein resides in the microtubule organizing center. Its subcellular location is the centrosome. It is found in the perinuclear region. It localises to the cell membrane. The protein localises to the spindle. The protein resides in the golgi apparatus. It catalyses the reaction L-seryl-[protein] + ATP = O-phospho-L-seryl-[protein] + ADP + H(+). It carries out the reaction L-threonyl-[protein] + ATP = O-phospho-L-threonyl-[protein] + ADP + H(+). The catalysed reaction is L-seryl-[tau protein] + ATP = O-phospho-L-seryl-[tau protein] + ADP + H(+). The enzyme catalyses L-threonyl-[tau protein] + ATP = O-phospho-L-threonyl-[tau protein] + ADP + H(+). With respect to regulation, exhibits substrate-dependent heparin activation. Drug-mediated inhibition leads to a delay of the oscillations with the magnitude of this effect dependent upon the timing of drug administration. Inhibited by phosphorylation. Functionally, essential serine/threonine-protein kinase that regulates diverse cellular growth and survival processes including Wnt signaling, DNA repair and circadian rhythms. It can phosphorylate a large number of proteins. Casein kinases are operationally defined by their preferential utilization of acidic proteins such as caseins as substrates. Phosphorylates connexin-43/GJA1, MAP1A, SNAPIN, MAPT/TAU, TOP2A, DCK, HIF1A, EIF6, p53/TP53, DVL2, DVL3, ESR1, AIB1/NCOA3, DNMT1, PKD2, YAP1, PER1 and PER2. Central component of the circadian clock. In balance with PP1, determines the circadian period length through the regulation of the speed and rhythmicity of PER1 and PER2 phosphorylation. Controls PER1 and PER2 nuclear transport and degradation. YAP1 phosphorylation promotes its SCF(beta-TRCP) E3 ubiquitin ligase-mediated ubiquitination and subsequent degradation. DNMT1 phosphorylation reduces its DNA-binding activity. Phosphorylation of ESR1 and AIB1/NCOA3 stimulates their activity and coactivation. Phosphorylation of DVL2 and DVL3 regulates WNT3A signaling pathway that controls neurite outgrowth. Phosphorylates NEDD9/HEF1. EIF6 phosphorylation promotes its nuclear export. Triggers down-regulation of dopamine receptors in the forebrain. Activates DCK in vitro by phosphorylation. TOP2A phosphorylation favors DNA cleavable complex formation. May regulate the formation of the mitotic spindle apparatus in extravillous trophoblast. Modulates connexin-43/GJA1 gap junction assembly by phosphorylation. Probably involved in lymphocyte physiology. Regulates fast synaptic transmission mediated by glutamate. This is Casein kinase I isoform delta (CSNK1D) from Pongo abelii (Sumatran orangutan).